The following is a 98-amino-acid chain: Integration host factor subunit alpha (98 aa).

Belongs to the bacterial histone-like protein family. Heterodimer of an alpha and a beta chain.

This protein is one of the two subunits of integration host factor, a specific DNA-binding protein that functions in genetic recombination as well as in transcriptional and translational control. The polypeptide is Integration host factor subunit alpha (Glaesserella parasuis serovar 5 (strain SH0165) (Haemophilus parasuis)).